We begin with the raw amino-acid sequence, 44 residues long: Cytochrome b559 subunit beta (44 aa).

The chain crosses the membrane as a helical span at residues 19-35; it reads WVSIHALAVPTIFFLGS. His-23 is a binding site for heme.

Belongs to the PsbE/PsbF family. In terms of assembly, heterodimer of an alpha subunit and a beta subunit. PSII is composed of 1 copy each of membrane proteins PsbA, PsbB, PsbC, PsbD, PsbE, PsbF, PsbH, PsbI, PsbJ, PsbK, PsbL, PsbM, PsbT, PsbX, PsbY, PsbZ, Psb30/Ycf12, at least 3 peripheral proteins of the oxygen-evolving complex and a large number of cofactors. It forms dimeric complexes. Requires heme b as cofactor.

The protein localises to the plastid. The protein resides in the chloroplast thylakoid membrane. This b-type cytochrome is tightly associated with the reaction center of photosystem II (PSII). PSII is a light-driven water:plastoquinone oxidoreductase that uses light energy to abstract electrons from H(2)O, generating O(2) and a proton gradient subsequently used for ATP formation. It consists of a core antenna complex that captures photons, and an electron transfer chain that converts photonic excitation into a charge separation. This is Cytochrome b559 subunit beta from Chlamydomonas moewusii (Chlamydomonas eugametos).